The chain runs to 1172 residues: WD repeat-containing protein 48 homolog (1172 aa).

The segment at 1–115 (MYEYYSTGKI…HSYGGGGGGT (115 aa)) is disordered. Over residues 13-36 (LPQQVDSNGINSKPMNSSPSTPIP) the composition is skewed to polar residues. Low complexity predominate over residues 37–63 (NNNNNNNNNNNNNNNNNNNNNNNNNNN). Residues 64–89 (RNKSQQSFYLNNNNRNCGFSSPTKPQ) show a composition bias toward polar residues. Positions 90 to 107 (YNNNNNNNNNNNSNYNHS) are enriched in low complexity. WD repeat units lie at residues 152 to 202 (RHCF…GFKF), 208 to 246 (DHTDWVNDLFFNDSNILVSCSSDSTIKIWNTDSERCVNS), 249 to 548 (FHDD…SPMF), 560 to 599 (GEGISIYSLAIAQDASFVVSGSTERAIRGWDVRSGQKIFK), 602 to 641 (GHTDNIRSILLNDNSTRCLSASSDGTVRLWDIGEQRCIQV), 645 to 683 (LHTDSVWTLATNDSFSHFFSGGRDGMIFLTDLKTHQSRL), and 686 to 727 (RENE…NQSI). Positions 341–365 (ISTNNNNNNSSSSNNNNNNNNNNNN) are enriched in low complexity. The disordered stretch occupies residues 341–544 (ISTNNNNNNS…NDNNNLNKKF (204 aa)). Polar residues-rich tracts occupy residues 366–377 (GQTNTHENTAET), 388–408 (QLSSVNKNGIRSNLSNNNFRN), and 417–434 (PPSSVLNHTPKILSSNGR). Positions 435–485 (NVNNRENNNNNNNNNNNNNNNNNNNNNNNNNNNNNNNNNINNNNHENNGNV) are enriched in low complexity. The segment covering 486-503 (DVDDEDDDDDDDDDDDDD) has biased composition (acidic residues). Residues 504 to 513 (CNKNKKKYDD) show a composition bias toward basic and acidic residues. Positions 514-543 (NNNNNNYNNNNNKKNNSNDNNNDNNNLNKK) are enriched in low complexity. Residues 745 to 769 (NNNNNNNNNNNNNNNNNNNNNNNNN) are compositionally biased toward low complexity. The disordered stretch occupies residues 745–775 (NNNNNNNNNNNNNNNNNNNNNNNNNNREKLS). One copy of the WD 8 repeat lies at 794 to 833 (QGRAGIIKNQVLNNRRQVLTKDNDNNVQLWDITKGKEIES). The interval 926–986 (ELNHSNDSVN…TNSTTPNSGR (61 aa)) is disordered. Residues 930 to 984 (SNDSVNSSLSSNTSGDNNNNNYNNYNNYNNNNNNGLQKSSSSSSIVSTNSTTPNS) are compositionally biased toward low complexity.

The protein belongs to the WD repeat WDR48 family.

This chain is WD repeat-containing protein 48 homolog, found in Dictyostelium discoideum (Social amoeba).